A 116-amino-acid polypeptide reads, in one-letter code: Ribosome-binding factor A (116 aa).

This sequence belongs to the RbfA family. As to quaternary structure, monomer. Binds 30S ribosomal subunits, but not 50S ribosomal subunits or 70S ribosomes.

Its subcellular location is the cytoplasm. In terms of biological role, one of several proteins that assist in the late maturation steps of the functional core of the 30S ribosomal subunit. Associates with free 30S ribosomal subunits (but not with 30S subunits that are part of 70S ribosomes or polysomes). Required for efficient processing of 16S rRNA. May interact with the 5'-terminal helix region of 16S rRNA. The chain is Ribosome-binding factor A from Chlorobium phaeobacteroides (strain BS1).